Reading from the N-terminus, the 91-residue chain is Putative 26S proteasome complex subunit sem-1 (91 aa).

Residues 1–73 (MASTQPKNDA…SWDDDDTSDD (73 aa)) form a disordered region. Residues 8–28 (NDAKSTEPKPEQPVTEKKTAV) show a composition bias toward basic and acidic residues. Composition is skewed to acidic residues over residues 29–48 (LEED…AEDT) and 63–72 (ESWDDDDTSD).

The protein belongs to the DSS1/SEM1 family. In terms of assembly, part of the 26S proteasome.

In terms of biological role, subunit of the 26S proteasome which plays a role in ubiquitin-dependent proteolysis. The sequence is that of Putative 26S proteasome complex subunit sem-1 (sem-1) from Neurospora crassa (strain ATCC 24698 / 74-OR23-1A / CBS 708.71 / DSM 1257 / FGSC 987).